We begin with the raw amino-acid sequence, 213 residues long: Putative cytochrome c-type biogenesis protein HI_1454 (213 aa).

6 helical membrane-spanning segments follow: residues 15–35 (GLASFLSPCIFPIIPIYFGIL), 46–66 (FLFILGLSLTFVSLGFSFGFL), 77–97 (IIAGVIVIILGIHQLGIFKIG), 118–138 (AFVLGLTFSLGWTPCIGPILA), 154–174 (ASMMFVYVLGLATPFVLFSFF), and 192–212 (FKIGGGILIIVMGILLITNNF).

It belongs to the DsbD family.

Its subcellular location is the cell membrane. Its function is as follows. Could be involved in cytochrome c synthesis. The protein is Putative cytochrome c-type biogenesis protein HI_1454 of Haemophilus influenzae (strain ATCC 51907 / DSM 11121 / KW20 / Rd).